A 49-amino-acid chain; its full sequence is Small, acid-soluble spore protein K (49 aa).

The interval 1-49 (MRNKAKGFPNQVNHKFEGEPGATDAYASKRPNGETNTRPQERMRASGKR) is disordered. Basic and acidic residues predominate over residues 39–49 (PQERMRASGKR).

The protein belongs to the SspK family.

It localises to the spore core. This chain is Small, acid-soluble spore protein K, found in Bacillus pumilus (strain SAFR-032).